Here is a 594-residue protein sequence, read N- to C-terminus: Lysine--tRNA ligase cla4 (594 aa).

Residues M1 to A62 form a disordered region. Residues T18–K42 are compositionally biased toward basic and acidic residues.

It belongs to the class-II aminoacyl-tRNA synthetase family. As to quaternary structure, homodimer.

It carries out the reaction tRNA(Lys) + L-lysine + ATP = L-lysyl-tRNA(Lys) + AMP + diphosphate. Involved in self-resistance to cladosporin since this product is an inhibitor of lysyl-tRNA synthetase. Cla4 may not be inhibited by cladosporin, thereby imparting cladosporin resistance. When cladosporin biosynthesis is switched on, transcription of cla4 will then be necessary for continued protein synthesis in C.cladosporioides. In Cladosporium cladosporioides, this protein is Lysine--tRNA ligase cla4.